The primary structure comprises 341 residues: Hyaluronan and proteoglycan link protein 2 (341 aa).

The N-terminal stretch at 1–27 (MPSRIPLPAFCCFLLPWAFTSFHKALG) is a signal peptide. Residues 35 to 143 (PHYLLPPIHE…GIEDESVALT (109 aa)) enclose the Ig-like V-type domain. Intrachain disulfides connect C58–C129, C171–C241, C195–C216, C266–C337, and C291–C312. Link domains lie at 149–243 (VVFP…FCFT) and 246–339 (LAGQ…YCYA).

It belongs to the HAPLN family. In terms of tissue distribution, brain. Predominantly expressed by neurons. Colocalizes with versican V2 in developing and adult cerebellar white matter and at the nodes of Ranvier.

It localises to the secreted. It is found in the extracellular space. Its subcellular location is the extracellular matrix. In terms of biological role, mediates a firm binding of versican V2 to hyaluronic acid. May play a pivotal role in the formation of the hyaluronan-associated matrix in the central nervous system (CNS) which facilitates neuronal conduction and general structural stabilization. Binds to hyaluronic acid. The sequence is that of Hyaluronan and proteoglycan link protein 2 (Hapln2) from Mus musculus (Mouse).